The primary structure comprises 337 residues: Putative carbonic anhydrase-like protein 2 (337 aa).

An N-terminal signal peptide occupies residues 1–16 (MIPWLLTACIYPCVIG). Residues 17–274 (PDFWGLLHGD…LNGRLVRTNI (258 aa)) form the Alpha-carbonic anhydrase domain. The active site involves Tyr-140. Residue Asn-188 is glycosylated (N-linked (GlcNAc...) asparagine). 212–213 (TF) contributes to the substrate binding site.

The protein belongs to the alpha-carbonic anhydrase family.

Its subcellular location is the secreted. The sequence is that of Putative carbonic anhydrase-like protein 2 (cah-2) from Caenorhabditis elegans.